The primary structure comprises 422 residues: MSQLPRRDPRQEWIARNRLHPRHEEVLAALGQGATSEWPGPNGLMRKNPHRVGFIGPNGIKRIDRSGTQQGAGGGKASASVAGHKPLTEIAEPAFLVAVVPDMTGGRLSGHDKDLLGLARRLADADPAAQGAVLAVVFGSHKETNLGEAGVDRLLHLDSPEIAGYAPEARVGALITVEQAWTPRHWLLPDSKLGGGELGRRLAARLGERPATGIWQVEADAESATGWQCTARGAAGSLDIRRPLPRIALALAECAEPVSETRHTAAELVLPQPLPSTLSRIQDLGQVSVDPASVALSEAEFILAAGNGVRDWDAYHRAASVLGATEGASRVAVDEGYMPRDRQVGATGTWVTARVYIAVGISGAIQHLQGIQPCEKVIAINMDPSCDMIKRADLAVIGDSTQILEALVTLVSQAREEKRDAA.

The disordered stretch occupies residues 61 to 80 (KRIDRSGTQQGAGGGKASAS). FAD contacts are provided by residues 329-330 (SR), 343-347 (QVGAT), 360-367 (GISGAIQH), and N381.

It belongs to the ETF alpha-subunit/FixB family. In terms of assembly, heterodimer of an alpha and a beta subunit. FAD serves as cofactor.

Its function is as follows. Participates in the electron transfer process during N,N-dimethylglycine (DMG) degradation to sarcosine. The chain is Electron transfer flavoprotein subunit alpha from Chromohalobacter salexigens (strain ATCC BAA-138 / DSM 3043 / CIP 106854 / NCIMB 13768 / 1H11).